We begin with the raw amino-acid sequence, 897 residues long: Coiled-coil domain-containing protein lobo (897 aa).

Positions 27–49 (EIDEQRRSQGSESDFADEMEGEF) are disordered. Positions 40–49 (DFADEMEGEF) are enriched in acidic residues. Coiled coils occupy residues 269–306 (DLKS…DLEL) and 801–858 (SLLN…QRLT).

Belongs to the DRC7 family. In terms of tissue distribution, testis-specific (at protein level).

The protein resides in the cell projection. Its subcellular location is the cilium. The protein localises to the flagellum. It is found in the cytoplasm. It localises to the cytoskeleton. The protein resides in the cilium axoneme. Its function is as follows. Key component of the nexin-dynein regulatory complex (N-DRC), essential for N-DRC integrity. Involved in the regulation of flagellar motility. Involved in sperm motility. Required for the sperm to enter in the coiled storage seminal receptacle (SR) tubule. This Drosophila melanogaster (Fruit fly) protein is Coiled-coil domain-containing protein lobo (lobo).